An 84-amino-acid chain; its full sequence is Dihydroneopterin aldolase (84 aa).

Substrate-binding positions include Glu22, Tyr54, and Ile73 to Glu74.

The protein belongs to the DHNA family.

The catalysed reaction is 7,8-dihydroneopterin = 6-hydroxymethyl-7,8-dihydropterin + glycolaldehyde. It carries out the reaction 7,8-dihydroneopterin = 7,8-dihydromonapterin. The protein operates within cofactor biosynthesis; tetrahydrofolate biosynthesis; 2-amino-4-hydroxy-6-hydroxymethyl-7,8-dihydropteridine diphosphate from 7,8-dihydroneopterin triphosphate: step 3/4. Its function is as follows. Catalyzes the conversion of 7,8-dihydroneopterin to 6-hydroxymethyl-7,8-dihydropterin. Can also catalyze the epimerization of carbon 2' of dihydroneopterin to dihydromonapterin. This chain is Dihydroneopterin aldolase (folB), found in Staphylococcus haemolyticus.